The sequence spans 499 residues: CD-NTase-associated protein 4 (499 aa).

Residues 1–226 form an N-terminal endonuclease domain region; that stretch reads MATSVLANWH…DFRFDGAARA (226 aa). Residues D49 and Q72 contribute to the active site. D49 lines the Mg(2+) pocket. Mg(2+) is bound at residue I73. Residue K74 is part of the active site. The interval 258–464 is C-terminal SAVED domain; the sequence is FRNVALRSFS…HIFSAAPNAV (207 aa).

It belongs to the Cap4 nuclease family. In terms of assembly, a monomer in the absence of ligand, in its presence it forms oligomers. Mg(2+) serves as cofactor.

Its activity is regulated as follows. DNase activity is activated upon ligand binding (cAAG). Inhibited by EDTA. Its function is as follows. Effector DNase of a CBASS antivirus system. CBASS (cyclic oligonucleotide-based antiphage signaling system) provides immunity against bacteriophages. The CD-NTase protein (CdnD) synthesizes cyclic nucleotides in response to infection; these serve as specific second messenger signals. The signals activate a diverse range of effectors, leading to bacterial cell death and thus abortive phage infection. A type II-C(AAG) CBASS system. Binds second messenger 3',3',3'-cyclic AMP-AMP-GMP (cAAG). In the presence of cAAG (synthesized by the cognate CD-NTase protein in the CBASS operon), endonucleolytically degrades dsDNA to approximately 17 bp length fragments, with a preference for 5'-C|NG sites. Only binds DNA in the presence of cAAG. Not activated by c-di-AMP, c-di-GMP, 3',3'-cyclic GMP-AMP (cGAMP) or the second messenger of A.baumanii strain ATCC 27244. Functionally, protects E.coli against phage T2 infection. When the cdnD-cap2-cap3-cap4 operon is introduced in E.coli there is a more than 10(3) decrease in the efficiency of T2 plaque formation. The operon does not protect against phage T5 and only about 10-fold against T7. Expression of cdnD-cap4 alone protects E.coli against phage T2 infection. The chain is CD-NTase-associated protein 4 from Enterobacter hormaechei subsp. hoffmannii (strain UCI 50).